Reading from the N-terminus, the 217-residue chain is Cytidylate kinase (217 aa).

9-17 contacts ATP; sequence GPSSSGKSS.

Belongs to the cytidylate kinase family. Type 1 subfamily.

Its subcellular location is the cytoplasm. It catalyses the reaction CMP + ATP = CDP + ADP. It carries out the reaction dCMP + ATP = dCDP + ADP. In Mycoplasma genitalium (strain ATCC 33530 / DSM 19775 / NCTC 10195 / G37) (Mycoplasmoides genitalium), this protein is Cytidylate kinase.